Consider the following 568-residue polypeptide: Autophagy-related protein 17 (568 aa).

Disordered stretches follow at residues 1-59 and 522-568; these read MASF…DSSE and SYEM…ERPF. Basic and acidic residues predominate over residues 522-546; it reads SYEMEAHGEPENEGKVETAYERETE.

It belongs to the ATG17 family.

It localises to the cytoplasm. The protein localises to the preautophagosomal structure membrane. In terms of biological role, autophagy-specific protein that functions in response to autophagy-inducing signals as a scaffold to recruit other ATG proteins to organize pre-autophagosomal structure (PAS) formation. Modulates the timing and magnitude of the autophagy response, such as the size of the sequestering vesicles. Plays particularly a role in pexophagy and nucleophagy. The sequence is that of Autophagy-related protein 17 (apg-9) from Neurospora crassa (strain ATCC 24698 / 74-OR23-1A / CBS 708.71 / DSM 1257 / FGSC 987).